Reading from the N-terminus, the 946-residue chain is Bifunctional glutamine synthetase adenylyltransferase/adenylyl-removing enzyme (946 aa).

Residues 1 to 440 (MKPLSSPLQQ…VFNELIGDDE (440 aa)) form an adenylyl removase region. The adenylyl transferase stretch occupies residues 449-946 (SEQWRELWQD…ASWQKWLVEE (498 aa)).

It belongs to the GlnE family. Requires Mg(2+) as cofactor.

It catalyses the reaction [glutamine synthetase]-O(4)-(5'-adenylyl)-L-tyrosine + phosphate = [glutamine synthetase]-L-tyrosine + ADP. The enzyme catalyses [glutamine synthetase]-L-tyrosine + ATP = [glutamine synthetase]-O(4)-(5'-adenylyl)-L-tyrosine + diphosphate. Involved in the regulation of glutamine synthetase GlnA, a key enzyme in the process to assimilate ammonia. When cellular nitrogen levels are high, the C-terminal adenylyl transferase (AT) inactivates GlnA by covalent transfer of an adenylyl group from ATP to specific tyrosine residue of GlnA, thus reducing its activity. Conversely, when nitrogen levels are low, the N-terminal adenylyl removase (AR) activates GlnA by removing the adenylyl group by phosphorolysis, increasing its activity. The regulatory region of GlnE binds the signal transduction protein PII (GlnB) which indicates the nitrogen status of the cell. This chain is Bifunctional glutamine synthetase adenylyltransferase/adenylyl-removing enzyme, found in Escherichia coli O127:H6 (strain E2348/69 / EPEC).